A 59-amino-acid polypeptide reads, in one-letter code: MYLFYVLLSSLFLSALIYVIGKSHPNLFMFISLFVNVVTILYLVFKDYGQYIIAKPINT.

A signal peptide spans 1–21 (MYLFYVLLSSLFLSALIYVIG). At 22 to 24 (KSH) the chain is on the extracellular side. A helical transmembrane segment spans residues 25–45 (PNLFMFISLFVNVVTILYLVF). Over 46–59 (KDYGQYIIAKPINT) the chain is Cytoplasmic.

The protein localises to the host membrane. This is an uncharacterized protein from Acidianus convivator (ABV).